Reading from the N-terminus, the 149-residue chain is 3-hydroxyacyl-[acyl-carrier-protein] dehydratase FabZ (149 aa).

His-53 is a catalytic residue.

This sequence belongs to the thioester dehydratase family. FabZ subfamily.

The protein localises to the cytoplasm. The catalysed reaction is a (3R)-hydroxyacyl-[ACP] = a (2E)-enoyl-[ACP] + H2O. Involved in unsaturated fatty acids biosynthesis. Catalyzes the dehydration of short chain beta-hydroxyacyl-ACPs and long chain saturated and unsaturated beta-hydroxyacyl-ACPs. This is 3-hydroxyacyl-[acyl-carrier-protein] dehydratase FabZ from Neisseria gonorrhoeae (strain ATCC 700825 / FA 1090).